Here is a 479-residue protein sequence, read N- to C-terminus: ATP-dependent RNA helicase DDX19B (479 aa).

N-acetylalanine is present on Ala2. The segment at Ala2–Glu300 is N-terminal lobe. Residues Thr34–Glu54 form a disordered region. The tract at residues Asp55–Ser68 is N-terminal helix. A Q motif motif is present at residues Lys92 to Glu120. Residues Gln119 and Ser138–Thr145 each bind ATP. The Helicase ATP-binding domain maps to Leu125–Ile295. The DEAD box motif lies at Asp242–Asp245. Residues Glu301 to Asn479 form a C-terminal lobe region. Positions Thr306–Ile474 constitute a Helicase C-terminal domain. ATP-binding residues include Arg429 and Arg432.

This sequence belongs to the DEAD box helicase family. DDX19/DBP5 subfamily. In terms of assembly, associates with the nuclear pore complex via interaction with NUP214. Interacts with NUP214 or RNA in a mutually exclusive manner.

It is found in the cytoplasm. Its subcellular location is the nucleus. It localises to the nucleoplasm. The catalysed reaction is ATP + H2O = ADP + phosphate + H(+). ATP-dependent RNA helicase involved in mRNA export from the nucleus. Rather than unwinding RNA duplexes, DDX19B functions as a remodeler of ribonucleoprotein particles, whereby proteins bound to nuclear mRNA are dissociated and replaced by cytoplasmic mRNA binding proteins. This is ATP-dependent RNA helicase DDX19B (DDX19B) from Homo sapiens (Human).